Consider the following 311-residue polypeptide: DNA replication terminus site-binding protein (311 aa).

It belongs to the Tus family.

The protein localises to the cytoplasm. Trans-acting protein required for termination of DNA replication. Binds to DNA replication terminator sequences (terA to terF) to prevent the passage of replication forks. The termination efficiency will be affected by the affinity of this protein for the terminator sequence. The polypeptide is DNA replication terminus site-binding protein (Yersinia pseudotuberculosis serotype I (strain IP32953)).